Consider the following 404-residue polypeptide: Chorismate synthase (404 aa).

NADP(+) contacts are provided by arginine 40 and arginine 46. FMN is bound by residues 133 to 135, 266 to 267, glycine 313, 328 to 332, and arginine 354; these read RSS, QA, and KPIPT. A disordered region spans residues 283–320; sequence PGSQVHDPIEPREDGAQAYPRRTNHAGGTEGGTTTGMP. The disordered stretch occupies residues 337–357; that stretch reads LDSVDTATGEPEPTRYERSDI.

Belongs to the chorismate synthase family. In terms of assembly, homotetramer. The cofactor is FMNH2.

The catalysed reaction is 5-O-(1-carboxyvinyl)-3-phosphoshikimate = chorismate + phosphate. The protein operates within metabolic intermediate biosynthesis; chorismate biosynthesis; chorismate from D-erythrose 4-phosphate and phosphoenolpyruvate: step 7/7. In terms of biological role, catalyzes the anti-1,4-elimination of the C-3 phosphate and the C-6 proR hydrogen from 5-enolpyruvylshikimate-3-phosphate (EPSP) to yield chorismate, which is the branch point compound that serves as the starting substrate for the three terminal pathways of aromatic amino acid biosynthesis. This reaction introduces a second double bond into the aromatic ring system. This is Chorismate synthase from Salinibacter ruber (strain DSM 13855 / M31).